A 304-amino-acid polypeptide reads, in one-letter code: MSHLLTMSELSEQEISEILKDAEDFANGKERKTTEQTFVANLFFENSTRTRFSFEVAEKRLGLEVLDFSADASSVQKGETLYDTIRTLESIGTKAVVIRHEQDRYFDELKDQVNIPILNAGDGCGNHPTQCLLDLLTIKQEFGRFEGLKIAIVGDVRHSRVARSNAEALTKLGATIYFASPEEWKDEENTFGTYKSLDELVPEVDVMMLLRVQHERHDHYETDIMKEYHEQHGLTVEREKRMKEGSIIMHPAPVNRDVEIASELVECERSRIFKQMENGVYVRMAVLKRALPNVLGGMKHELFV.

Carbamoyl phosphate contacts are provided by arginine 49 and threonine 50. Position 77 (lysine 77) interacts with L-aspartate. Residues arginine 99, histidine 127, and glutamine 130 each coordinate carbamoyl phosphate. L-aspartate is bound by residues arginine 160 and arginine 211. The carbamoyl phosphate site is built by alanine 252 and proline 253.

The protein belongs to the aspartate/ornithine carbamoyltransferase superfamily. ATCase family. In terms of assembly, heterododecamer (2C3:3R2) of six catalytic PyrB chains organized as two trimers (C3), and six regulatory PyrI chains organized as three dimers (R2).

The enzyme catalyses carbamoyl phosphate + L-aspartate = N-carbamoyl-L-aspartate + phosphate + H(+). Its pathway is pyrimidine metabolism; UMP biosynthesis via de novo pathway; (S)-dihydroorotate from bicarbonate: step 2/3. In terms of biological role, catalyzes the condensation of carbamoyl phosphate and aspartate to form carbamoyl aspartate and inorganic phosphate, the committed step in the de novo pyrimidine nucleotide biosynthesis pathway. This Bacillus mycoides (strain KBAB4) (Bacillus weihenstephanensis) protein is Aspartate carbamoyltransferase catalytic subunit.